The chain runs to 151 residues: Pseudo histidine-containing phosphotransfer protein 2 (151 aa).

The region spanning 38-133 is the HPt domain; sequence SPNFVEEVAA…ATLKQKLESY (96 aa).

Functionally, functions as a two-component phosphorelay mediator between cytokinin sensor histidine kinases and response regulators (B-type ARRs). Plays an important role in propagating cytokinin signal transduction. In Oryza sativa subsp. japonica (Rice), this protein is Pseudo histidine-containing phosphotransfer protein 2.